The sequence spans 230 residues: Cytidylate kinase (230 aa).

12–20 is a binding site for ATP; it reads GPSGAGKGT.

It belongs to the cytidylate kinase family. Type 1 subfamily.

The protein resides in the cytoplasm. It catalyses the reaction CMP + ATP = CDP + ADP. The catalysed reaction is dCMP + ATP = dCDP + ADP. The polypeptide is Cytidylate kinase (Shewanella sp. (strain W3-18-1)).